Here is a 223-residue protein sequence, read N- to C-terminus: Uracil-DNA glycosylase (223 aa).

The active-site Proton acceptor is aspartate 67.

Belongs to the uracil-DNA glycosylase (UDG) superfamily. UNG family.

Its subcellular location is the cytoplasm. It catalyses the reaction Hydrolyzes single-stranded DNA or mismatched double-stranded DNA and polynucleotides, releasing free uracil.. Excises uracil residues from the DNA which can arise as a result of misincorporation of dUMP residues by DNA polymerase or due to deamination of cytosine. This chain is Uracil-DNA glycosylase, found in Borrelia hermsii (strain HS1 / DAH).